The chain runs to 866 residues: Dynamin-2 (866 aa).

A Dynamin-type G domain is found at 28–294; it reads HLDLPQIAVV…LTNHIRESLP (267 aa). The interval 38–45 is G1 motif; that stretch reads GGQSAGKS. GDP-binding residues include serine 41, glycine 43, lysine 44, serine 45, serine 46, arginine 59, and glycine 60. The interval 64–66 is G2 motif; sequence VTR. Positions 136–139 are G3 motif; it reads DLPG. The interval 205–208 is G4 motif; sequence TKLD. The GDP site is built by lysine 206, aspartate 208, and aspartate 211. A Phosphotyrosine modification is found at tyrosine 231. The tract at residues 235 to 238 is G5 motif; sequence VNRS. Residues asparagine 236, arginine 237, and glutamine 239 each coordinate GDP. An N6-acetyllysine modification is found at lysine 299. One can recognise a PH domain in the interval 515–621; that stretch reads QVIRRGWLTI…WKASFLRAGV (107 aa). Phosphotyrosine is present on tyrosine 593. N6-acetyllysine is present on lysine 594. The region spanning 649-740 is the GED domain; that stretch reads VETIRNLVDS…IIGDISTSTV (92 aa). The segment at 737-866 is disordered; it reads TSTVSTPVPP…IRPAEPSLLD (130 aa). Threonine 751 is subject to Phosphothreonine. The span at 752 to 763 shows a compositional bias: polar residues; that stretch reads WIQNTSSHSPTP. A Phosphoserine; by CDK1 modification is found at serine 760. Pro residues-rich tracts occupy residues 784–794, 802–811, and 822–851; these read TPGPPLIPVPV, PPIPSRPGPH, and SAPP…PAAP.

It belongs to the TRAFAC class dynamin-like GTPase superfamily. Dynamin/Fzo/YdjA family. As to quaternary structure, oligomerizes into a helical polymer that self-assembles around the vesicle membrane, when associated to the menbrane through lipid binding. Interacts with SHANK1 and SHANK2. Interacts with SNX9. Interacts (via C-terminal proline-rich domain (PRD)) with SNX18 (via SH3 domain); this interaction regulates ATG9A and ATG16L1 trafficking from recycling endosomes to sites of autophagosome formation. Interacts with SNX33 (via SH3 domain). Interacts with MYO1E (via SH3 domain). Interacts with PSTPIP1 (via SH3 domain). Interacts with CTNND2. Interacts (via C-terminal proline-rich domain (PRD)) with BIN1 (via SH3 domain); this interaction allows the recruitment of DNM2 to the membrane tubules and inhibits self-assembly-stimulated GTPase activity on the membrane. Interacts with GABARAP, GABARAPL1 and GABARAPL2. Interacts with MAP1LC3B (the lipidate and non-lipidated LC3 form); this interaction mediates recycling endosome scission leading to autophagosome release. Interacts with ITSN1. Interacts with MYOF. Interacts (via C-terminal proline-rich domain (PRD)) with SH3BP4 (via SH3 domain); this interaction controls the GTPase activity and is prevented by EGFR-induced tyrosine phosphorylation of either DNM2 or SH3BP4. May interact with PIK3C3. May be a component of a complex composed of RAB5A (in GDP-bound form), DYN2 and PIK3C3. Interacts with SDC4; this interaction is markedly enhanced at focal ahesion site upon induction of focal adhesions and stress-fiber formation. Interacts with ACTN1. Interacts with CTTN; this interaction stimulates the intrinsic GTPase activity of DNM2 and stabilizes the association of DNM2 and actin filaments; in addition this interaction is stimulated by ligand binding to the receptor, leading to the recruitment of the DNM2-CTTN complex to the sequestered receptor-ligand complex to its internalization. Interacts with NOSTRIN (via SH3 domain); this interaction allows the recruitment of NOS3 to dynamin-positive structures. Interacts with TUBG1; this interaction may participate in centrosome cohesion. In terms of processing, phosphorylation at Ser-844 by GSK3-alpha relieves the inhibition of BIN1 and promotes endocytosis. Phosphorylation at Ser-760 by CDK1 is greatly increased upon mitotic entry. It regulates cytokinesis downstream of calcineurin, and does not affect clathrin-mediated endocytosis. Dephosphorylated by calcineurin/PP2 during cytokinesis in a Ca(2+)- and calmodulin-dependent manner. Phosphorylated on tyrosine residues by EGFR and after activation of SRC.

Its subcellular location is the cytoplasm. The protein resides in the cytoskeleton. It localises to the cytoplasmic vesicle. It is found in the clathrin-coated vesicle. The protein localises to the cell projection. Its subcellular location is the uropodium. The protein resides in the endosome. It localises to the microtubule organizing center. It is found in the centrosome. The protein localises to the centriole. Its subcellular location is the recycling endosome. The protein resides in the phagocytic cup. It localises to the phagosome membrane. It is found in the podosome. The protein localises to the cell junction. Its subcellular location is the postsynaptic density. The protein resides in the synapse. It localises to the synaptosome. It is found in the midbody. The protein localises to the membrane. Its subcellular location is the clathrin-coated pit. The catalysed reaction is GTP + H2O = GDP + phosphate + H(+). Its function is as follows. Catalyzes the hydrolysis of GTP and utilizes this energy to mediate vesicle scission at plasma membrane during endocytosis and filament remodeling at many actin structures during organization of the actin cytoskeleton. Plays an important role in vesicular trafficking processes, namely clathrin-mediated endocytosis (CME), exocytic and clathrin-coated vesicle from the trans-Golgi network, and PDGF stimulated macropinocytosis. During vesicular trafficking process, associates to the membrane, through lipid binding, and self-assembles into ring-like structure through oligomerization to form a helical polymer around the vesicle membrane and leading to vesicle scission. Plays a role in organization of the actin cytoskeleton by mediating arrangement of stress fibers and actin bundles in podocytes. During organization of the actin cytoskeleton, self-assembles into ring-like structure that directly bundles actin filaments to form typical membrane tubules decorated with dynamin spiral polymers. Self-assembly increases GTPase activity and the GTP hydrolysis causes the rapid depolymerization of dynamin spiral polymers, and results in dispersion of actin bundles. Remodels, through its interaction with CTTN, bundled actin filaments in a GTPase-dependent manner and plays a role in orchestrating the global actomyosin cytoskeleton. The interaction with CTTN stabilizes the interaction of DNM2 and actin filaments and stimulates the intrinsic GTPase activity that results in actin filament-barbed ends and increases the sensitivity of filaments in bundles to the actin depolymerizing factor, CFL1. Plays a role in the autophagy process, by participating in the formation of ATG9A vesicles destined for the autophagosomes through its interaction with SNX18, by mediating recycling endosome scission leading to autophagosome release through MAP1LC3B interaction. Also regulates maturation of apoptotic cell corpse-containing phagosomes by recruiting PIK3C3 to the phagosome membrane. Also plays a role in cytokinesis. May participate in centrosome cohesion through its interaction with TUBG1. Plays a role in the regulation of neuron morphology, axon growth and formation of neuronal growth cones. Involved in membrane tubulation. The chain is Dynamin-2 from Bos taurus (Bovine).